The following is a 396-amino-acid chain: Elongation factor Tu (396 aa).

The tr-type G domain maps to 10–205 (KPHVNIGTIG…ACDESIPDPE (196 aa)). The interval 19–26 (GHVDHGKT) is G1. 19–26 (GHVDHGKT) contacts GTP. T26 lines the Mg(2+) pocket. The interval 62–66 (GITIN) is G2. The G3 stretch occupies residues 83–86 (DAPG). GTP contacts are provided by residues 83 to 87 (DAPGH) and 138 to 141 (NKCD). A G4 region spans residues 138-141 (NKCD). Residues 175–177 (SAL) are G5.

The protein belongs to the TRAFAC class translation factor GTPase superfamily. Classic translation factor GTPase family. EF-Tu/EF-1A subfamily. In terms of assembly, monomer.

It localises to the cytoplasm. The catalysed reaction is GTP + H2O = GDP + phosphate + H(+). GTP hydrolase that promotes the GTP-dependent binding of aminoacyl-tRNA to the A-site of ribosomes during protein biosynthesis. The chain is Elongation factor Tu from Corynebacterium jeikeium (strain K411).